A 219-amino-acid polypeptide reads, in one-letter code: Response regulator ArlR (219 aa).

Residues 3–116 form the Response regulatory domain; the sequence is NILIVEDEQN…ELFARIRAVL (114 aa). Asp-52 is modified (4-aspartylphosphate). Residues 122 to 219 constitute a DNA-binding region (ompR/PhoB-type); that stretch reads KDIIDINGIK…TVRGVGYVIR (98 aa).

In terms of processing, phosphorylated by ArlS.

It is found in the cytoplasm. Member of the two-component regulatory system ArlS/ArlR. This Staphylococcus haemolyticus (strain JCSC1435) protein is Response regulator ArlR (arlR).